Here is a 220-residue protein sequence, read N- to C-terminus: UPF0319 protein YccT (220 aa).

Residues 1 to 20 (MKTGALTTFLALCLPVTVFA) form the signal peptide.

It belongs to the UPF0319 family.

In Salmonella schwarzengrund (strain CVM19633), this protein is UPF0319 protein YccT.